Consider the following 1235-residue polypeptide: DNA polymerase catalytic subunit (1235 aa).

Disordered stretches follow at residues glutamine 640–arginine 692 and alanine 1098–proline 1134. Positions alanine 650–glutamate 661 are enriched in basic and acidic residues. Acidic residues predominate over residues glutamate 662 to glutamate 675. Basic and acidic residues predominate over residues glutamate 676–glycine 691.

The protein belongs to the DNA polymerase type-B family. As to quaternary structure, forms a complex with the ssDNA-binding protein UL29, the DNA polymerase processivity factor, and the alkaline exonuclease. Interacts with the putative helicase-primase complex subunit UL8; this interaction may coordinate leading and lagging strand DNA synthesis at the replication fork.

It localises to the host nucleus. The enzyme catalyses DNA(n) + a 2'-deoxyribonucleoside 5'-triphosphate = DNA(n+1) + diphosphate. The catalysed reaction is Endonucleolytic cleavage to 5'-phosphomonoester.. Replicates viral genomic DNA. The replication complex is composed of six viral proteins: the DNA polymerase, processivity factor, primase, primase-associated factor, helicase, and ssDNA-binding protein. Additionally, the polymerase contains an intrinsic ribonuclease H (RNase H) activity that specifically degrades RNA/DNA heteroduplexes or duplex DNA substrates in the 5' to 3' direction. Therefore, it can catalyze the excision of the RNA primers that initiate the synthesis of Okazaki fragments at a replication fork during viral DNA replication. The protein is DNA polymerase catalytic subunit of Human herpesvirus 1 (strain Angelotti) (HHV-1).